The sequence spans 215 residues: Abscisic acid receptor PYL6 (215 aa).

The START-like stretch occupies residues 54–209 (HVVGPSQCFS…NLQSLAKLAE (156 aa)). Cys61 and Cys190 are disulfide-bonded. Abscisate-binding positions include Lys90, 120-125 (AAFSLE), 147-153 (RLMNYKS), and Glu174. The short motif at 116 to 120 (SGLPA) is the Gate loop element. A Latch loop motif is present at residues 146–148 (HRL).

It belongs to the PYR/PYL/RCAR abscisic acid intracellular receptor family. As to quaternary structure, monomer. Homodimer. Binds ABA on one subunit only. Interacts with HAB1, ABI1 and ABI2, and possibly with other PP2Cs. Binds to CARs protein in an ABA-independent manner, both at the plasma membrane and in the nucleus. Interacts directly with CAR1 and CAR4. Interacts with MYC2 in the nucleus. Interaction with MYC2 is increased in the presence of abscisic acid.

The protein resides in the cytoplasm. Its subcellular location is the nucleus. The protein localises to the cell membrane. Its function is as follows. Receptor for abscisic acid (ABA) required for ABA-mediated responses such as stomatal closure and germination inhibition. Inhibits the activity of group-A protein phosphatases type 2C (PP2Cs) in an ABA-independent manner but more efficiently when activated by ABA. Can be activated by both (-)-ABA and (+)-ABA. May link ABA and jasmonate signaling pathways by modifying MYC2 transcriptional activity, and regulation of JAZ6 and JAZ8 gene expression by MYC2. The protein is Abscisic acid receptor PYL6 (PYL6) of Arabidopsis thaliana (Mouse-ear cress).